Consider the following 299-residue polypeptide: MAVVIDGKAKAASVTEAVRKSAEALEAEKGVKPGLAVVIVGNDPASHAYVNSKSKMAKQCGFNSIQHTLPEETTQAALLKLVGELNTDASIHGILVQLPLPKHFNSDEIIQSILPEKDVDGLSVLNAGKLATGDLATGLISCTPAGAMLLVRGIHGDDLSGLNAVVIGRSNLFGKPMGQLLLNANATVTMAHSRTKDLVTVCKTADILVAAVGRAAMVKGDWVKPGATVIDVGINRIAAPEKGEGKSKLVGDVAFDEASAVAAAITPVPGGVGPMTIAMLMANTVIAAHRALGKTAPKF.

NADP(+) is bound by residues 168–170 (GRS), Ser193, and Ile234.

Belongs to the tetrahydrofolate dehydrogenase/cyclohydrolase family. Homodimer.

It carries out the reaction (6R)-5,10-methylene-5,6,7,8-tetrahydrofolate + NADP(+) = (6R)-5,10-methenyltetrahydrofolate + NADPH. It catalyses the reaction (6R)-5,10-methenyltetrahydrofolate + H2O = (6R)-10-formyltetrahydrofolate + H(+). Its pathway is one-carbon metabolism; tetrahydrofolate interconversion. Catalyzes the oxidation of 5,10-methylenetetrahydrofolate to 5,10-methenyltetrahydrofolate and then the hydrolysis of 5,10-methenyltetrahydrofolate to 10-formyltetrahydrofolate. The chain is Bifunctional protein FolD from Agrobacterium fabrum (strain C58 / ATCC 33970) (Agrobacterium tumefaciens (strain C58)).